Reading from the N-terminus, the 264-residue chain is Indole-3-glycerol phosphate synthase (264 aa).

It belongs to the TrpC family.

The catalysed reaction is 1-(2-carboxyphenylamino)-1-deoxy-D-ribulose 5-phosphate + H(+) = (1S,2R)-1-C-(indol-3-yl)glycerol 3-phosphate + CO2 + H2O. It functions in the pathway amino-acid biosynthesis; L-tryptophan biosynthesis; L-tryptophan from chorismate: step 4/5. The polypeptide is Indole-3-glycerol phosphate synthase (Albidiferax ferrireducens (strain ATCC BAA-621 / DSM 15236 / T118) (Rhodoferax ferrireducens)).